Consider the following 521-residue polypeptide: Lysine--tRNA ligase (521 aa).

The short motif at 32–40 (PSGTVHIGN) is the 'HIGH' region element. The 'KMSKS' region signature appears at 280–284 (KISSS).

This sequence belongs to the class-I aminoacyl-tRNA synthetase family.

The protein resides in the cytoplasm. The catalysed reaction is tRNA(Lys) + L-lysine + ATP = L-lysyl-tRNA(Lys) + AMP + diphosphate. In Borrelia garinii subsp. bavariensis (strain ATCC BAA-2496 / DSM 23469 / PBi) (Borreliella bavariensis), this protein is Lysine--tRNA ligase.